We begin with the raw amino-acid sequence, 487 residues long: MSLPPIRLPSPYGSDRLVQLAARLRPALCDTLITVGSQEFPAHSLVLAGVSQQLGRRGQWALGEGISPSTFAQLLNFVYGESVELQPGELRPLQEAARALGVQSLEEACWRARGDRAKKPDPGLKKHQEEPEKPSRNPERELGDPGEKQKPEQVSRTGGREQEMLHKHSPPRGRPEMAGATQEAQQEQTRSKEKRLQAPVGQRGADGKHGVLTWLRENPGGSEESLRKLPGPLPPAGSLQTSVTPRPSWAEAPWLVGGQPALWSILLMPPRYGIPFYHSTPTTGAWQEVWREQRIPLSLNAPKGLWSQNQLASSSPTPGSLPQGPAQLSPGEMEESDQGHTGALATCAGHEDKAGCPPRPHPPPAPPARSRPYACSVCGKRFSLKHQMETHYRVHTGEKPFSCSLCPQRSRDFSAMTKHLRTHGAAPYRCSLCGAGCPSLASMQAHMRGHSPSQLPPGWTIRSTFLYSSSRPSRPSTSPCCPSSSTT.

The BTB domain maps to 29-87 (CDTLITVGSQEFPAHSLVLAGVSQQLGRRGQWALGEGISPSTFAQLLNFVYGESVELQP). Over residues 112 to 166 (ARGDRAKKPDPGLKKHQEEPEKPSRNPERELGDPGEKQKPEQVSRTGGREQEMLH) the composition is skewed to basic and acidic residues. Disordered regions lie at residues 112-244 (ARGD…TSVT) and 308-371 (QNQL…ARSR). A compositionally biased stretch (polar residues) spans 308–320 (QNQLASSSPTPGS). Residues 357–369 (PPRPHPPPAPPAR) are compositionally biased toward pro residues. 3 consecutive C2H2-type zinc fingers follow at residues 373-395 (YACSVCGKRFSLKHQMETHYRVH), 401-423 (FSCSLCPQRSRDFSAMTKHLRTH), and 428-450 (YRCSLCGAGCPSLASMQAHMRGH). The disordered stretch occupies residues 468-487 (SSSRPSRPSTSPCCPSSSTT).

The protein belongs to the krueppel C2H2-type zinc-finger protein family. As to quaternary structure, homodimer (via PTB domain). Interacts with the N-terminal of FANCC. Interacts with ZBTB16. Interacts with GATA3. In terms of tissue distribution, predominantly expressed in testis. Some isoforms are ubiquitously expressed.

The protein resides in the nucleus. Its function is as follows. DNA-binding protein that binds to the to a 5'-TGTACAGTGT-3' core sequence. May function as a transcriptional transactivator and transcriptional repressor. Probably exerts its repressor effect by preventing GATA3 from binding to DNA. May play a role in regulating the differentiation and activation of helper T-cells. The protein is Zinc finger and BTB domain-containing protein 32 (ZBTB32) of Homo sapiens (Human).